Here is a 432-residue protein sequence, read N- to C-terminus: Trigger factor (432 aa).

The PPIase FKBP-type domain maps to 161-246 (EDRVTIDFTG…LKKVEERELP (86 aa)).

Belongs to the FKBP-type PPIase family. Tig subfamily. As to quaternary structure, homodimer and monomer. In vivo most of the ribosomes are in complex with monomeric TF. Uncomplexed TF, however, is in a monomer-dimer equilibrium with approximately two thirds of TF existing in a dimeric state.

It is found in the cytoplasm. It catalyses the reaction [protein]-peptidylproline (omega=180) = [protein]-peptidylproline (omega=0). Functionally, involved in protein export. Acts as a chaperone by maintaining the newly synthesized protein in an open conformation. Functions as a peptidyl-prolyl cis-trans isomerase. This chain is Trigger factor, found in Escherichia fergusonii (strain ATCC 35469 / DSM 13698 / CCUG 18766 / IAM 14443 / JCM 21226 / LMG 7866 / NBRC 102419 / NCTC 12128 / CDC 0568-73).